Consider the following 452-residue polypeptide: Tubulin beta-2 chain (452 aa).

8 residues coordinate GTP: Q11, E72, S141, G145, T146, G147, N207, and N229. Residue E72 coordinates Mg(2+). The segment at A414–S452 is disordered. The segment covering T432–A444 has biased composition (acidic residues).

The protein belongs to the tubulin family. In terms of assembly, dimer of alpha and beta chains. A typical microtubule is a hollow water-filled tube with an outer diameter of 25 nm and an inner diameter of 15 nM. Alpha-beta heterodimers associate head-to-tail to form protofilaments running lengthwise along the microtubule wall with the beta-tubulin subunit facing the microtubule plus end conferring a structural polarity. Microtubules usually have 13 protofilaments but different protofilament numbers can be found in some organisms and specialized cells. It depends on Mg(2+) as a cofactor.

The protein resides in the cytoplasm. The protein localises to the cytoskeleton. Functionally, tubulin is the major constituent of microtubules, a cylinder consisting of laterally associated linear protofilaments composed of alpha- and beta-tubulin heterodimers. Microtubules grow by the addition of GTP-tubulin dimers to the microtubule end, where a stabilizing cap forms. Below the cap, tubulin dimers are in GDP-bound state, owing to GTPase activity of alpha-tubulin. The sequence is that of Tubulin beta-2 chain (TUBB2) from Solanum tuberosum (Potato).